Here is a 273-residue protein sequence, read N- to C-terminus: 3-methyl-2-oxobutanoate hydroxymethyltransferase (273 aa).

Mg(2+) contacts are provided by Asp41 and Asp80. 3-methyl-2-oxobutanoate is bound by residues 41–42, Asp80, and Lys110; that span reads DS. Residue Glu112 participates in Mg(2+) binding. Glu180 serves as the catalytic Proton acceptor.

This sequence belongs to the PanB family. Homodecamer; pentamer of dimers. Mg(2+) serves as cofactor.

The protein localises to the cytoplasm. The enzyme catalyses 3-methyl-2-oxobutanoate + (6R)-5,10-methylene-5,6,7,8-tetrahydrofolate + H2O = 2-dehydropantoate + (6S)-5,6,7,8-tetrahydrofolate. It participates in cofactor biosynthesis; (R)-pantothenate biosynthesis; (R)-pantoate from 3-methyl-2-oxobutanoate: step 1/2. In terms of biological role, catalyzes the reversible reaction in which hydroxymethyl group from 5,10-methylenetetrahydrofolate is transferred onto alpha-ketoisovalerate to form ketopantoate. The chain is 3-methyl-2-oxobutanoate hydroxymethyltransferase from Deinococcus geothermalis (strain DSM 11300 / CIP 105573 / AG-3a).